The primary structure comprises 113 residues: Iron-sulfur cluster insertion protein ErpA (113 aa).

Iron-sulfur cluster-binding residues include cysteine 41, cysteine 105, and cysteine 107.

It belongs to the HesB/IscA family. As to quaternary structure, homodimer. It depends on iron-sulfur cluster as a cofactor.

Its function is as follows. Required for insertion of 4Fe-4S clusters for at least IspG. The polypeptide is Iron-sulfur cluster insertion protein ErpA (Aliivibrio salmonicida (strain LFI1238) (Vibrio salmonicida (strain LFI1238))).